The sequence spans 375 residues: Nucleosome assembly protein 1-like 4 (375 aa).

Residues 1-28 form a disordered region; that stretch reads MAENSLSDGGPADSVEAAKNASNTEKLT. Ala-2 is subject to N-acetylalanine. Residues Ser-5, Ser-7, and Ser-49 each carry the phosphoserine modification. The residue at position 51 (Thr-51) is a Phosphothreonine. Phosphoserine is present on residues Ser-53 and Ser-54. A Phosphothreonine modification is found at Thr-58. Lys-105 carries the post-translational modification N6-acetyllysine. At Ser-125 the chain carries Phosphoserine. N6-acetyllysine is present on Lys-146. A Nuclear localization signal motif is present at residues 265–271; it reads IKKKQKH. Ser-304 carries the phosphoserine modification. The disordered stretch occupies residues 339–375; it reads AIEDDDNFEEGEEGEEEELEGDEEGEDEDDADVNPKV.

The protein belongs to the nucleosome assembly protein (NAP) family. In terms of assembly, interacts with core (H2A, H2B, H3, H4) and linker (H1) histones. In terms of processing, polyglutamylated and polyglycylated. These 2 modifications occur exclusively on glutamate residues and result in either polyglutamate or polyglycine chains on the gamma-carboxyl group. Both modifications can coexist on the same protein on adjacent residues, and lowering polyglycylation levels increases polyglutamylation, and reciprocally. Polyglutamylated by TTLL4. Phosphorylated at the G0/G1 boundary but it is not phosphorylated in S-phase. Phosphorylated protein remains in the cytoplasm in a complex with histones during the G0/G1 transition, whereas dephosphorylation triggers its transport into the nucleus at the G1/S-boundary.

Its subcellular location is the nucleus. It is found in the cytoplasm. Acts as a histone chaperone in nucleosome assembly. In condensing spermatids, mediates the loading of the heterodimer composed of histones H2AB1 and H2BC1/TH2B onto the nucleosomes, thereby promoting the replacement of histones to protamine in male germ cells. This Mus musculus (Mouse) protein is Nucleosome assembly protein 1-like 4 (Nap1l4).